The following is a 329-amino-acid chain: Beta-ketoacyl-[acyl-carrier-protein] synthase III (329 aa).

Catalysis depends on residues Cys113 and His255. Positions 256–260 (QANQR) are ACP-binding. Asn285 is an active-site residue.

The protein belongs to the thiolase-like superfamily. FabH family. Homodimer.

It localises to the cytoplasm. It catalyses the reaction malonyl-[ACP] + acetyl-CoA + H(+) = 3-oxobutanoyl-[ACP] + CO2 + CoA. It participates in lipid metabolism; fatty acid biosynthesis. Catalyzes the condensation reaction of fatty acid synthesis by the addition to an acyl acceptor of two carbons from malonyl-ACP. Catalyzes the first condensation reaction which initiates fatty acid synthesis and may therefore play a role in governing the total rate of fatty acid production. Possesses both acetoacetyl-ACP synthase and acetyl transacylase activities. Its substrate specificity determines the biosynthesis of branched-chain and/or straight-chain of fatty acids. The chain is Beta-ketoacyl-[acyl-carrier-protein] synthase III from Chlorobium phaeobacteroides (strain DSM 266 / SMG 266 / 2430).